Consider the following 337-residue polypeptide: Molybdate import system permease protein MolB (337 aa).

Over 1–5 (MQPDS) the chain is Cytoplasmic. The chain crosses the membrane as a helical span at residues 6–25 (YPKILFGLTLLLVITAVISL). The Periplasmic segment spans residues 26-51 (GIGRYSLSVPQIGQILWAKATALEID). A helical transmembrane segment spans residues 52–87 (PVQQQVIFQVRLPRILTALCVGAGLALSGVVLQGIF). Residues 88–98 (RNPLVNPHIIG) are Cytoplasmic-facing. A helical transmembrane segment spans residues 99–113 (VTSGSAFGGTLAIFF). Topologically, residues 114–116 (GFS) are periplasmic. Residues 117-140 (LYGLFTSTILFGFGTLALVFLFSF) traverse the membrane as a helical segment. At 141–146 (KFNQRS) the chain is on the cytoplasmic side. A helical membrane pass occupies residues 147 to 171 (LLMLILIGMILSGLFSALVSLLQYI). Residues 172–193 (SDTEEKLPSIVFWLMGSFATSN) lie on the Periplasmic side of the membrane. The chain crosses the membrane as a helical span at residues 194 to 214 (WEKLLFFFVPFLLCSSILLSL). The Cytoplasmic portion of the chain corresponds to 215–234 (SWRLNLLSLDEKEAKALGVK). Residues 235–257 (MAPLRWLVIFLSGSLVACQVAIS) form a helical membrane-spanning segment. The Periplasmic portion of the chain corresponds to 258-264 (GSIGWVG). A helical membrane pass occupies residues 265-275 (LIIPHLSRMLV). Residues 276 to 278 (GAN) lie on the Cytoplasmic side of the membrane. Residues 279 to 304 (HQSLLPCTMLVGATYMLLVDNVARSL) form a helical membrane-spanning segment. The Periplasmic segment spans residues 305-310 (SDAEIP). A helical membrane pass occupies residues 311 to 329 (ISILTALIGAPLFGVLVYK). The Cytoplasmic portion of the chain corresponds to 330-337 (LKRGGMNE).

It belongs to the binding-protein-dependent transport system permease family. FecCD subfamily. The complex is composed of two ATP-binding proteins (MolC), two transmembrane proteins (MolB) and a solute-binding protein (MolA).

The protein resides in the cell inner membrane. The MolBCA complex shows a decrease in affinity in the presence of increasing concentrations of substrate and nucleotide. Its function is as follows. Part of the ABC transporter complex MolBCA involved in molybdate import. Responsible for the translocation of the substrate across the membrane. Functions as a low-affinity molybdate transporter. This chain is Molybdate import system permease protein MolB, found in Haemophilus influenzae (strain ATCC 51907 / DSM 11121 / KW20 / Rd).